The primary structure comprises 352 residues: Nicotinate-nucleotide--dimethylbenzimidazole phosphoribosyltransferase (352 aa).

Glu316 functions as the Proton acceptor in the catalytic mechanism.

The protein belongs to the CobT family.

The catalysed reaction is 5,6-dimethylbenzimidazole + nicotinate beta-D-ribonucleotide = alpha-ribazole 5'-phosphate + nicotinate + H(+). It functions in the pathway nucleoside biosynthesis; alpha-ribazole biosynthesis; alpha-ribazole from 5,6-dimethylbenzimidazole: step 1/2. Functionally, catalyzes the synthesis of alpha-ribazole-5'-phosphate from nicotinate mononucleotide (NAMN) and 5,6-dimethylbenzimidazole (DMB). In Ruminiclostridium cellulolyticum (strain ATCC 35319 / DSM 5812 / JCM 6584 / H10) (Clostridium cellulolyticum), this protein is Nicotinate-nucleotide--dimethylbenzimidazole phosphoribosyltransferase.